The primary structure comprises 469 residues: Sorting and assembly machinery component 50 homolog (469 aa).

In terms of domain architecture, POTRA spans 45–125 (VVVQHVHFDG…LDVTFEVTEL (81 aa)). Lysine 255 carries the N6-methyllysine modification.

This sequence belongs to the SAM50/omp85 family. As to quaternary structure, associates with the mitochondrial contact site and cristae organizing system (MICOS) complex, composed of at least MICOS10/MIC10, CHCHD3/MIC19, CHCHD6/MIC25, APOOL/MIC27, IMMT/MIC60, APOO/MIC23/MIC26 and QIL1/MIC13. This complex was also known under the names MINOS or MitOS complex. The MICOS complex associates with mitochondrial outer membrane proteins SAMM50, MTX1 and MTX2 (together described as components of the mitochondrial outer membrane sorting assembly machinery (SAM) complex) and DNAJC11, mitochondrial inner membrane protein TMEM11 and with HSPA9. The MICOS and SAM complexes together with DNAJC11 are part of a large protein complex spanning both membranes termed the mitochondrial intermembrane space bridging (MIB) complex. Interacts with IMMT/MIC60. Interacts with CHCHD3/MIC19. Interacts with ARMC1.

The protein localises to the mitochondrion outer membrane. Its subcellular location is the cytoplasm. The protein resides in the mitochondrion. Functionally, plays a crucial role in the maintenance of the structure of mitochondrial cristae and the proper assembly of the mitochondrial respiratory chain complexes. Required for the assembly of TOMM40 into the TOM complex. The protein is Sorting and assembly machinery component 50 homolog (SAMM50) of Bos taurus (Bovine).